A 180-amino-acid polypeptide reads, in one-letter code: uncharacterized protein (180 aa).

Residues 114–136 (DKISESDSLPDEYKEYVVKHDSD) are compositionally biased toward basic and acidic residues. Residues 114–180 (DKISESDSLP…NFDNPDDNPK (67 aa)) form a disordered region. A compositionally biased stretch (acidic residues) spans 137–146 (NSDNDSDNSD). The segment covering 147 to 173 (NDSNNSDNDSNNSDSDSDNSNDPNNFD) has biased composition (low complexity).

This is an uncharacterized protein from Acanthamoeba polyphaga (Amoeba).